A 612-amino-acid chain; its full sequence is Glycosyltransferase 25 family member (612 aa).

A signal peptide spans 1-20; sequence MNKQVIFGLLLACILVCISG. N-linked (GlcNAc...) asparagine glycans are attached at residues Asn-106, Asn-227, Asn-263, and Asn-524. Positions 609–612 match the Prevents secretion from ER motif; that stretch reads HQEL.

It belongs to the glycosyltransferase 25 family.

The protein resides in the endoplasmic reticulum lumen. This is Glycosyltransferase 25 family member from Drosophila melanogaster (Fruit fly).